Here is a 332-residue protein sequence, read N- to C-terminus: Clavesin-1 (332 aa).

Positions 96 to 257 (IKRALMDGFP…EFGGTLPPYD (162 aa)) constitute a CRAL-TRIO domain. A disordered region spans residues 300–332 (KYMKRSHSVVEPGTLRHEEERENENTQPLLALD). Over residues 313–323 (TLRHEEERENE) the composition is skewed to basic and acidic residues.

The protein localises to the golgi apparatus. The protein resides in the trans-Golgi network membrane. It localises to the early endosome membrane. It is found in the cytoplasmic vesicle. Its subcellular location is the clathrin-coated vesicle. Its function is as follows. Required for normal morphology of late endosomes and/or lysosomes in neurons. Binds phosphatidylinositol 3,5-bisphosphate (PtdIns(3,5)P2). The polypeptide is Clavesin-1 (clvs1) (Xenopus laevis (African clawed frog)).